The primary structure comprises 78 residues: RNA-binding protein KhpA (78 aa).

Positions 29–78 (TIIYELSVAKPDIGKIIGKEGRTIKAIRTLLVSVASRNNVRVSLEIMEEK) constitute a KH domain.

The protein belongs to the KhpA RNA-binding protein family.

The protein localises to the cytoplasm. A probable RNA-binding protein. The protein is RNA-binding protein KhpA of Chlamydia pneumoniae (Chlamydophila pneumoniae).